Here is a 40-residue protein sequence, read N- to C-terminus: Large ribosomal subunit protein bL36 (40 aa).

Belongs to the bacterial ribosomal protein bL36 family.

This chain is Large ribosomal subunit protein bL36, found in Coxiella burnetii (strain Dugway 5J108-111).